A 22-amino-acid polypeptide reads, in one-letter code: Chlorate reductase subunit gamma (22 aa).

Residues 1-22 (EXSEQNPNILEIKPGDTVKVXT) form a disordered region.

As to quaternary structure, heterotrimer of alpha, beta and gamma subunits. Requires heme b as cofactor.

It localises to the cytoplasm. Its function is as follows. May transfer electrons to the iron-sulfur centers of the beta subunit of chlorate reductase. The chain is Chlorate reductase subunit gamma from Stutzerimonas chloritidismutans (Pseudomonas chloritidismutans).